The following is a 983-amino-acid chain: 3',5'-cyclic-AMP phosphodiesterase, isoforms N/G (983 aa).

Disordered regions lie at residues 31 to 333 (MPEG…SAGL), 349 to 370 (SDSDFEMSPKSMSRNSSIASES), 400 to 429 (VPASNKSRRPNQSSSASRSGNPPGAPLSQG), and 528 to 566 (SAGQYARSRSPRGPPMSQISGVKRPLSHTNSFTGERLPT). Positions 35–50 (GEDHRGDLNQKGENNN) are enriched in basic and acidic residues. Polar residues predominate over residues 51–60 (RPRPSISLAN). A compositionally biased stretch (gly residues) spans 84–97 (SVGGGDSDGGGEAI). Low complexity-rich tracts occupy residues 112-121 (LSTTTSNSSS) and 145-167 (QLQQHSSSLSNGNRGNRGLSQRS). Acidic residues predominate over residues 174 to 199 (AEGEEFDVDPMDEDDEDQTYDRETEE). Composition is skewed to low complexity over residues 219–234 (SSLFSRSDSSATTTSS) and 248–261 (AASILSSSMCSDLM). Composition is skewed to polar residues over residues 268-287 (STATEYSVKSVTTGNTSQRR), 358-368 (KSMSRNSSIAS), and 401-419 (PASNKSRRPNQSSSASRSG). The PDEase domain occupies 569-898 (VETPRENELG…DYYQSMIPPS (330 aa)). Catalysis depends on H645, which acts as the Proton donor. 645–649 (HNSLH) provides a ligand contact to 3',5'-cyclic AMP. A divalent metal cation is bound by residues H649, H685, D686, and D803. 3',5'-cyclic AMP contacts are provided by D686, D803, and Q854. A compositionally biased stretch (acidic residues) spans 920 to 937 (EESDQENLAELEEGDESG). The segment at 920-983 (EESDQENLAE…CQNQPQHGGM (64 aa)) is disordered. Residues 938 to 955 (GESTTTGTTGTTAASALS) show a composition bias toward low complexity. Residues 956-967 (GAGGGGGGGGGM) show a composition bias toward gly residues. Over residues 973–983 (GCQNQPQHGGM) the composition is skewed to polar residues.

The protein belongs to the cyclic nucleotide phosphodiesterase family. PDE4 subfamily. Monomer. A divalent metal cation serves as cofactor.

It carries out the reaction 3',5'-cyclic AMP + H2O = AMP + H(+). It functions in the pathway purine metabolism; 3',5'-cyclic AMP degradation; AMP from 3',5'-cyclic AMP: step 1/1. Hydrolyzes the second messenger cAMP, which is a key regulator of many important physiological processes. Vital for female fertility. Required for learning/memory. This is 3',5'-cyclic-AMP phosphodiesterase, isoforms N/G from Drosophila melanogaster (Fruit fly).